The chain runs to 245 residues: Pathogenesis-related thaumatin-like protein 3.6 (245 aa).

The N-terminal stretch at 1-19 (GSIPFWIALIASFSVFLQG) is a signal peptide. Disulfide bonds link Cys-33/Cys-226, Cys-74/Cys-84, Cys-89/Cys-95, Cys-142/Cys-215, Cys-148/Cys-198, Cys-156/Cys-166, Cys-170/Cys-179, and Cys-180/Cys-185. A glycan (N-linked (GlcNAc...) asparagine) is linked at Asn-90. An N-linked (GlcNAc...) asparagine glycan is attached at Asn-186.

The protein belongs to the thaumatin family. In terms of tissue distribution, mostly expressed in strobili, and, to a lower extent, in roots of seedlings and saplings.

In terms of biological role, may be involved in disease resistance. This chain is Pathogenesis-related thaumatin-like protein 3.6, found in Cryptomeria japonica (Japanese cedar).